The chain runs to 155 residues: Protein archease-like (155 aa).

Asp26, Asp154, and Ile155 together coordinate Ca(2+).

Belongs to the archease family.

Component of the tRNA-splicing ligase complex required to facilitate the enzymatic turnover of catalytic subunit RtcB. In Caenorhabditis briggsae, this protein is Protein archease-like.